Here is a 217-residue protein sequence, read N- to C-terminus: Small ribosomal subunit protein eS6 (217 aa).

Belongs to the eukaryotic ribosomal protein eS6 family.

The chain is Small ribosomal subunit protein eS6 from Hyperthermus butylicus (strain DSM 5456 / JCM 9403 / PLM1-5).